Consider the following 325-residue polypeptide: Bifunctional nuclease 1 (325 aa).

Residues 117-252 form the BFN domain; that stretch reads CVHNNPQGGH…YLAYSDGMRV (136 aa). The 35-residue stretch at 284–318 folds into the UVR domain; that stretch reads TKEFNILSKMMQAVDEERYDEAAEWRDKLGQFRAK.

It belongs to the bifunctional nuclease family.

Its subcellular location is the nucleus. Bifunctional nuclease with both RNase and DNase activities. Involved in basal defense response. Participates in abscisic acid-derived callose deposition following infection by a necrotrophic pathogen. This is Bifunctional nuclease 1 (BBD1) from Arabidopsis thaliana (Mouse-ear cress).